The following is a 616-amino-acid chain: Protein translocase subunit SecD (616 aa).

Transmembrane regions (helical) follow at residues 11–31 (LMVIFIVAIGILYSLPNIYGE), 453–473 (QGINASLWGLVAVIAFMLFYY), 475–495 (MFGVIASFALVINIVLLVGLM), 497–517 (ILPGATLSMPGIAGIVLTLGM), 547–569 (YNGAFTSIFDANLTTILTAIILY), and 585–605 (LGVAISMFTAITGTRALVNAL).

Belongs to the SecD/SecF family. SecD subfamily. Forms a complex with SecF. Part of the essential Sec protein translocation apparatus which comprises SecA, SecYEG and auxiliary proteins SecDF-YajC and YidC.

It is found in the cell inner membrane. Functionally, part of the Sec protein translocase complex. Interacts with the SecYEG preprotein conducting channel. SecDF uses the proton motive force (PMF) to complete protein translocation after the ATP-dependent function of SecA. The chain is Protein translocase subunit SecD from Haemophilus influenzae (strain ATCC 51907 / DSM 11121 / KW20 / Rd).